We begin with the raw amino-acid sequence, 214 residues long: Probable transaldolase (214 aa).

The active-site Schiff-base intermediate with substrate is the K83.

The protein belongs to the transaldolase family. Type 3B subfamily.

Its subcellular location is the cytoplasm. It catalyses the reaction D-sedoheptulose 7-phosphate + D-glyceraldehyde 3-phosphate = D-erythrose 4-phosphate + beta-D-fructose 6-phosphate. It participates in carbohydrate degradation; pentose phosphate pathway; D-glyceraldehyde 3-phosphate and beta-D-fructose 6-phosphate from D-ribose 5-phosphate and D-xylulose 5-phosphate (non-oxidative stage): step 2/3. Functionally, transaldolase is important for the balance of metabolites in the pentose-phosphate pathway. This chain is Probable transaldolase, found in Geobacter metallireducens (strain ATCC 53774 / DSM 7210 / GS-15).